Here is a 217-residue protein sequence, read N- to C-terminus: 3-isopropylmalate dehydratase small subunit (217 aa).

This sequence belongs to the LeuD family. LeuD type 1 subfamily. As to quaternary structure, heterodimer of LeuC and LeuD.

The enzyme catalyses (2R,3S)-3-isopropylmalate = (2S)-2-isopropylmalate. The protein operates within amino-acid biosynthesis; L-leucine biosynthesis; L-leucine from 3-methyl-2-oxobutanoate: step 2/4. Catalyzes the isomerization between 2-isopropylmalate and 3-isopropylmalate, via the formation of 2-isopropylmaleate. The protein is 3-isopropylmalate dehydratase small subunit of Paraburkholderia phymatum (strain DSM 17167 / CIP 108236 / LMG 21445 / STM815) (Burkholderia phymatum).